A 385-amino-acid polypeptide reads, in one-letter code: Basigin (385 aa).

The first 21 residues, 1-21 (MAAALFVLLGFALLGTHGASG), serve as a signal peptide directing secretion. The 84-residue stretch at 37–120 (GGSVELHCEA…SNDPDRNHLT (84 aa)) folds into the Ig-like domain. 3 cysteine pairs are disulfide-bonded: Cys-44–Cys-108, Cys-157–Cys-203, and Cys-242–Cys-301. One can recognise an Ig-like C2-type domain in the interval 138–219 (EPGTVFTTVE…MGTANIQLHG (82 aa)). Over 138 to 323 (EPGTVFTTVE…ITLRVRSHLA (186 aa)) the chain is Extracellular. An N-linked (GlcNAc...) asparagine glycan is attached at Asn-160. Residues 195-199 (DDQWG) are essential for interaction with KDR/VEGFR2. The Ig-like V-type domain maps to 221-315 (PRVKAVKSSE…SKGSDQAIIT (95 aa)). Residues Asn-268 and Asn-302 are each glycosylated (N-linked (GlcNAc...) asparagine). Residues 324–344 (ALWPFLGIVAEVLVLVTIIFI) traverse the membrane as a helical segment. Residues 345–385 (YEKRRKPEDVLDDDDAGSAPLKSSGQHQNDKGKNVRQRNSS) lie on the Cytoplasmic side of the membrane. The tract at residues 353–385 (DVLDDDDAGSAPLKSSGQHQNDKGKNVRQRNSS) is disordered. Phosphoserine occurs at positions 362 and 368.

As to quaternary structure, homooligomer. Interacts with NXNL1. Interacts with SLC2A1 and SLC16A1/GLUT1. Interacts with XKR8; promoting its localization at the cell membrane. (Microbial infection) Interacts with P.falciparum (isolate 3D7) RH5/PfRH5; the interaction is required for the invasion of the host erythrocytes by the parasite at the merozoite stage. In terms of assembly, homooligomer. Forms heterooligomers with isoform 3. Interacts with VEGFA and KDR/VEGFR2. Interacts with PPIA/CYPA. Interacts with PPIL2; regulates BSG transport to the cell membrane. Interacts with SLC16A1; interaction mediates SLC16A3 targeting to the plasma membrane. Interacts with SLC16A12. Interacts with SLC16A11. Interacts with AJAP1. Interacts with SLC1A3, ATP1B2, MAG and L1CAM. Interacts with SLC16A3; interaction mediates SLC16A3 targeting to the plasma membrane. As to quaternary structure, (Microbial infection) Interacts with P.falciparum (isolates 3D7 or 7G8) RH5/PfRH5; the interaction is required for the invasion of the host erythrocytes by the parasite at the merozoite stage. (Microbial infection) Does not interact with severe acute respiratory syndrome coronavirus 2 (SARS-CoV-2) spike glycoprotein, even if previous works were based on a putative interaction. In terms of assembly, forms heterooligomers with isoform 2. As to quaternary structure, interacts with SLC16A6; this interaction mediates targeting to the plasma membrane. Post-translationally, N-glycosylated. In terms of tissue distribution, retina-specific. Expressed in retinal cone photoreceptors (at protein level). As to expression, expressed in erythrocytes (at protein level). Highly expressed in melanoma cell lines (at protein level). Highly expressed in the heart, kidney, skeletal muscle and testis. Highly expressed in the bone marrow, fetal liver, lung, testis and thymus.

It is found in the melanosome. The protein localises to the cell membrane. It localises to the photoreceptor inner segment. Its subcellular location is the cell projection. The protein resides in the cilium. It is found in the photoreceptor outer segment. The protein localises to the endosome. It localises to the endoplasmic reticulum membrane. Its subcellular location is the basolateral cell membrane. In terms of biological role, essential for normal retinal maturation and development. Acts as a retinal cell surface receptor for NXNL1 and plays an important role in NXNL1-mediated survival of retinal cone photoreceptors. In association with glucose transporter SLC16A1/GLUT1 and NXNL1, promotes retinal cone survival by enhancing aerobic glycolysis and accelerating the entry of glucose into photoreceptors. May act as a potent stimulator of IL6 secretion in multiple cell lines that include monocytes. (Microbial infection) Erythrocyte receptor for P.falciparum RH5 which is essential for erythrocyte invasion by the merozoite stage of P.falciparum isolates 3D7 and Dd2. Its function is as follows. Signaling receptor for cyclophilins, essential for PPIA/CYPA and PPIB/CYPB-dependent signaling related to chemotaxis and adhesion of immune cells. Plays an important role in targeting monocarboxylate transporters SLC16A1/GLUT1, SLC16A11 and SLC16A12 to the plasma membrane. Acts as a coreceptor for vascular endothelial growth factor receptor 2 (KDR/VEGFR2) in endothelial cells enhancing its VEGFA-mediated activation and downstream signaling. Promotes angiogenesis through EPAS1/HIF2A-mediated up-regulation of VEGFA (isoform VEGF-165 and VEGF-121) and KDR/VEGFR2 in endothelial cells. Plays a key role in regulating tumor growth, invasion, metastasis and neoangiogenesis by stimulating the production and release of extracellular matrix metalloproteinases and KDR/VEGFR2 by both tumor cells and stromal cells (fibroblasts and endothelial cells). Functionally, (Microbial infection) Erythrocyte receptor for P.falciparum RH5 which is essential for erythrocyte invasion by the merozoite stage of P.falciparum isolates 3D7, Dd2, 7G8 and HB3. Binding of P.falciparum RH5 results in BSG dimerization which triggers an increase in intracellular Ca(2+) in the erythrocyte. This essential step leads to a rearrangement of the erythrocyte cytoskeleton required for the merozoite invasion. In terms of biological role, (Microbial infection) Can facilitate human SARS coronavirus (SARS-CoV-1) infection via its interaction with virus-associated PPIA/CYPA. (Microbial infection) Can facilitate HIV-1 infection via its interaction with virus-associated PPIA/CYPA. Its function is as follows. (Microbial infection) First described as a receptor for severe acute respiratory syndrome coronavirus 2 (SARS-CoV-2), it is not required for SARS-CoV-2 infection. Functionally, (Microbial infection) Acts as a receptor for measles virus. In terms of biological role, (Microbial infection) Promotes entry of pentamer-expressing human cytomegalovirus (HCMV) into epithelial and endothelial cells. The sequence is that of Basigin from Homo sapiens (Human).